Here is a 138-residue protein sequence, read N- to C-terminus: Nucleoside diphosphate kinase (138 aa).

Residues Lys-11, Phe-59, Arg-87, Thr-93, Arg-104, and Asn-114 each coordinate ATP. His-117 serves as the catalytic Pros-phosphohistidine intermediate.

It belongs to the NDK family. Requires Mg(2+) as cofactor.

The protein resides in the cytoplasm. The enzyme catalyses a 2'-deoxyribonucleoside 5'-diphosphate + ATP = a 2'-deoxyribonucleoside 5'-triphosphate + ADP. It catalyses the reaction a ribonucleoside 5'-diphosphate + ATP = a ribonucleoside 5'-triphosphate + ADP. In terms of biological role, major role in the synthesis of nucleoside triphosphates other than ATP. The ATP gamma phosphate is transferred to the NDP beta phosphate via a ping-pong mechanism, using a phosphorylated active-site intermediate. The protein is Nucleoside diphosphate kinase of Saccharolobus solfataricus (strain ATCC 35092 / DSM 1617 / JCM 11322 / P2) (Sulfolobus solfataricus).